The sequence spans 66 residues: Large ribosomal subunit protein bL32 (66 aa).

The protein belongs to the bacterial ribosomal protein bL32 family.

This is Large ribosomal subunit protein bL32 from Leptospira interrogans serogroup Icterohaemorrhagiae serovar copenhageni (strain Fiocruz L1-130).